A 338-amino-acid polypeptide reads, in one-letter code: UDP-glucose 4-epimerase (338 aa).

Residues 11–12 (YI), 31–36 (DNLCNS), 58–59 (DI), 80–84 (FAGLK), asparagine 99, serine 124, tyrosine 149, lysine 153, and phenylalanine 178 contribute to the NAD(+) site. Substrate is bound by residues serine 124 and tyrosine 149. Residue tyrosine 149 is the Proton acceptor of the active site. Substrate-binding positions include asparagine 179, 199–200 (NL), 216–218 (AVF), arginine 231, 292–295 (RDGD), and tyrosine 299.

The protein belongs to the NAD(P)-dependent epimerase/dehydratase family. Homodimer. NAD(+) serves as cofactor.

The enzyme catalyses UDP-alpha-D-glucose = UDP-alpha-D-galactose. The protein operates within carbohydrate metabolism; galactose metabolism. In terms of biological role, involved in the metabolism of galactose. Catalyzes the conversion of UDP-galactose (UDP-Gal) to UDP-glucose (UDP-Glc) through a mechanism involving the transient reduction of NAD. This is UDP-glucose 4-epimerase (galE) from Salmonella typhimurium (strain LT2 / SGSC1412 / ATCC 700720).